Reading from the N-terminus, the 131-residue chain is Holo-[acyl-carrier-protein] synthase (131 aa).

Residues aspartate 9 and glutamate 58 each coordinate Mg(2+).

This sequence belongs to the P-Pant transferase superfamily. AcpS family. Mg(2+) serves as cofactor.

Its subcellular location is the cytoplasm. It catalyses the reaction apo-[ACP] + CoA = holo-[ACP] + adenosine 3',5'-bisphosphate + H(+). Transfers the 4'-phosphopantetheine moiety from coenzyme A to a Ser of acyl-carrier-protein. In Salmonella arizonae (strain ATCC BAA-731 / CDC346-86 / RSK2980), this protein is Holo-[acyl-carrier-protein] synthase.